The chain runs to 56 residues: Ribosome biogenesis protein Nop10 (56 aa).

The protein belongs to the NOP10 family.

Functionally, involved in ribosome biogenesis; more specifically in 18S rRNA pseudouridylation and in cleavage of pre-rRNA. This is Ribosome biogenesis protein Nop10 from Saccharolobus islandicus (strain Y.N.15.51 / Yellowstone #2) (Sulfolobus islandicus).